Reading from the N-terminus, the 832-residue chain is Spindle pole body component alp6 (832 aa).

Residues 1–186 (MSEIHVKTAL…STETSSVQHT (186 aa)) form an interaction with mzt1 region. Thr-286 carries the post-translational modification Phosphothreonine.

This sequence belongs to the TUBGCP family. As to quaternary structure, part of the gamma-tubulin complex. Interacts directly with mzt1. Interacts with mto1. Interacts with mto2.

The protein localises to the cytoplasm. It is found in the cytoskeleton. It localises to the microtubule organizing center. The protein resides in the spindle pole body. Its function is as follows. Component of the gamma tubule complex that is required for the regulation of both interphase microtubules and mitotic bipolar spindles. This is Spindle pole body component alp6 (alp6) from Schizosaccharomyces pombe (strain 972 / ATCC 24843) (Fission yeast).